A 591-amino-acid polypeptide reads, in one-letter code: Aspartate--tRNA(Asp/Asn) ligase (591 aa).

Glutamate 174 is an L-aspartate binding site. The tract at residues 198–201 (QLFK) is aspartate. Arginine 220 lines the L-aspartate pocket. Residues 220-222 (RDE) and glutamine 229 contribute to the ATP site. L-aspartate is bound at residue histidine 450. Residue glutamate 483 participates in ATP binding. Arginine 490 contributes to the L-aspartate binding site. 535 to 538 (GLDR) serves as a coordination point for ATP.

The protein belongs to the class-II aminoacyl-tRNA synthetase family. Type 1 subfamily. Homodimer.

It localises to the cytoplasm. It catalyses the reaction tRNA(Asx) + L-aspartate + ATP = L-aspartyl-tRNA(Asx) + AMP + diphosphate. Functionally, aspartyl-tRNA synthetase with relaxed tRNA specificity since it is able to aspartylate not only its cognate tRNA(Asp) but also tRNA(Asn). Reaction proceeds in two steps: L-aspartate is first activated by ATP to form Asp-AMP and then transferred to the acceptor end of tRNA(Asp/Asn). This chain is Aspartate--tRNA(Asp/Asn) ligase, found in Ectopseudomonas mendocina (strain ymp) (Pseudomonas mendocina).